We begin with the raw amino-acid sequence, 246 residues long: Proteasome subunit alpha type-6 (246 aa).

This sequence belongs to the peptidase T1A family. The 26S proteasome consists of a 20S proteasome core and two 19S regulatory subunits. The 20S proteasome core is composed of 28 subunits that are arranged in four stacked rings, resulting in a barrel-shaped structure. The two end rings are each formed by seven alpha subunits, and the two central rings are each formed by seven beta subunits. The catalytic chamber with the active sites is on the inside of the barrel.

It localises to the cytoplasm. Its subcellular location is the nucleus. Functionally, the proteasome is a multicatalytic proteinase complex which is characterized by its ability to cleave peptides with Arg, Phe, Tyr, Leu, and Glu adjacent to the leaving group at neutral or slightly basic pH. The proteasome has an ATP-dependent proteolytic activity. The protein is Proteasome subunit alpha type-6 (PAA1) of Oryza sativa subsp. japonica (Rice).